Here is a 164-residue protein sequence, read N- to C-terminus: Ubiquitin-fold modifier-conjugating enzyme 1 (164 aa).

The active-site Glycyl thioester intermediate is Cys-116.

This sequence belongs to the ubiquitin-conjugating enzyme family. UFC1 subfamily.

E2-like enzyme which forms an intermediate with UFM1 via a thioester linkage. This is Ubiquitin-fold modifier-conjugating enzyme 1 from Drosophila persimilis (Fruit fly).